The following is a 519-amino-acid chain: MADTEEAYGMPDTPVEAEPKELQCEPKQDNQMGASSKTPTSPQAAFTQQGMEGIKVFLHERELWLKFHEVGTEMIITKAGRRMFPSYKVKVTGLNPKTKYILLMDIVPADDHRYKFADNKWSVTGKAEPAMPGRLYVHPDSPATGTHWMRQLVSSQKLKLTNNHLDPFGHIILNSMHKYQPRLHIVKADENNGFGSKNTAFCTHVFSETAFIAATSYQNHKITQLKIENNPFAKGFRGSDDMELHRMSRMQSKEYPVVPRSTVRQKVSSNHSPFSQETRNITGSSTLNSQYQCENGVSSTSQDLLPPSSAYPSLPHESAPIYHCTKRKVSEEPAELSYKKPYMDTSPSEEDPYYRSGYPQPSSSSSSNNSFRTESAQRQACMYASSAPATEPVPSLEDISCNSWSSVPPYSSCTVGGGMQPMERLPYQHFSAHFTSSSLMPRLSNHGSTQPSDSHSMFQHQSTHQTIVRQCNPQPGLQQSSALQSTEFLYPHSVPRTISPHQYHSVHGVGMAPDWNENS.

A disordered region spans residues 1-43 (MADTEEAYGMPDTPVEAEPKELQCEPKQDNQMGASSKTPTSPQ). Residues 17 to 28 (AEPKELQCEPKQ) show a composition bias toward basic and acidic residues. The segment covering 29–43 (DNQMGASSKTPTSPQ) has biased composition (polar residues). A DNA-binding region (T-box) is located at residues 63–238 (LWLKFHEVGT…NNPFAKGFRG (176 aa)). Disordered stretches follow at residues 254-312 (EYPV…SAYP) and 335-376 (ELSY…TESA). Polar residues predominate over residues 262–303 (TVRQKVSSNHSPFSQETRNITGSSTLNSQYQCENGVSSTSQD).

As to quaternary structure, monomer. Homodimer (via the T-box); binds DNA as homodimer.

Its subcellular location is the nucleus. The protein localises to the cytoplasm. Its function is as follows. DNA-binding protein that regulates the transcription of several genes and is involved in heart development and limb pattern formation. May bind to the core DNA motif of promoters. The sequence is that of T-box transcription factor TBX5 (tbx5) from Xenopus tropicalis (Western clawed frog).